Consider the following 238-residue polypeptide: Succinate dehydrogenase assembly factor 2, mitochondrial (238 aa).

The interval 47–82 (GLKADGSRADQAEAGASQSLDKQSRTLDSVRDDTLS) is disordered. Residues 68–80 (KQSRTLDSVRDDT) show a composition bias toward basic and acidic residues.

This sequence belongs to the SDHAF2 family. As to quaternary structure, interacts with the flavoprotein subunit within the SDH catalytic dimer.

It localises to the mitochondrion matrix. Its function is as follows. Plays an essential role in the assembly of succinate dehydrogenase (SDH), an enzyme complex (also referred to as respiratory complex II) that is a component of both the tricarboxylic acid (TCA) cycle and the mitochondrial electron transport chain, and which couples the oxidation of succinate to fumarate with the reduction of ubiquinone (coenzyme Q) to ubiquinol. Required for flavinylation (covalent attachment of FAD) of the flavoprotein subunit of the SDH catalytic dimer. In Mycosarcoma maydis (Corn smut fungus), this protein is Succinate dehydrogenase assembly factor 2, mitochondrial.